The sequence spans 784 residues: MPRALWTAWVWAVIILSMEGASHQASSLSCDPTGVCDGHSRSLNSIPSGLTDGVKSLDLSNNEITYVSNRDLQRCVNLKTLRLGANEIHTVEEDSFFHLRNLEYLDLSYNRLSNLSSSWFRSLYALKFLNLLGNVYKTLGETSLFSHLPNLRTLKVGNSNSFTEIHEKDFTGLIFLEELEISAQNLQIYVPKSLKSIQNISHLILHLKQPVLLVDILVDIVSSLDCLELRDTNLHTFHFSEASISEMNTSVKKLIFRNVQFTDESFVEVVKLFNYVSGILEVEFDDCTHDGIGDFRALSLDRIRHLGNVETLTIRKLHIPQFFLFHDLSSIYPLTGKVKRVTIESSKVFLVPCLLSQHLKSLEYLDLSENLMSEETLKNSACKDAWPFLQTLVLRQNRLKSLEKTGELLLTLENLNNLDISKNNFLSMPETCRWPGKMKQLNLSSTRVHSLTQCLPQTLEILDVSNNNLDSFSLILPQLKELYISRNKLKTLPDASFLPVLSVMRISRNIINTFSKEQLDSFQQLKTLEAGGNNFICSCDFLSFTQGQQALGRVLVDWPAEYRCDSPSHVRGQRVQDARLSLSECHRAAVVSAACCALFLLLLLTGVLCHRFHGLWYMKMMWAWLQAKRKPRKAPRRDICYDAFVSYSEQDSYWVENLMVQELEHFNPPFKLCLHKRDFIPGKWIIDNIIDSIEKSHKTIFVLSENFVKSEWCKYELDFSHFRLFDENNDAAILILLEPIDKKAIPQRFCKLRKIMNTKTYLEWPVDETQQEGFWLNLRAAIRS.

The N-terminal stretch at 1-20 (MPRALWTAWVWAVIILSMEG) is a signal peptide. Residues 21–587 (ASHQASSLSC…ARLSLSECHR (567 aa)) lie on the Extracellular side of the membrane. Cysteines 30 and 36 form a disulfide. LRR repeat units lie at residues 54–77 (VKSL…RCVN), 78–101 (LKTL…HLRN), 102–125 (LEYL…SLYA), 126–150 (LKFL…HLPN), 151–175 (LRTL…GLIF), 176–199 (LEEL…SIQN), 200–223 (ISHL…IVSS), 224–250 (LDCL…MNTS), 251–278 (VKKL…YVSG), 279–308 (ILEV…HLGN), 309–337 (VETL…LTGK), 338–361 (VKRV…HLKS), 362–388 (LEYL…AWPF), 389–414 (LQTL…TLEN), 415–437 (LNNL…WPGK), 438–457 (MKQL…CLPQ), 458–478 (TLEI…ILPQ), 479–500 (LKEL…FLPV), and 501–524 (LSVM…SFQQ). Asparagine 114 is a glycosylation site (N-linked (GlcNAc...) asparagine). An N-linked (GlcNAc...) asparagine glycan is attached at asparagine 199. The N-linked (GlcNAc...) asparagine glycan is linked to asparagine 248. Cysteine 353 and cysteine 382 are joined by a disulfide. A disulfide bond links cysteine 432 and cysteine 454. The N-linked (GlcNAc...) asparagine glycan is linked to asparagine 442. The region spanning 525-579 (LKTLEAGGNNFICSCDFLSFTQGQQALGRVLVDWPAEYRCDSPSHVRGQRVQDAR) is the LRRCT domain. The chain crosses the membrane as a helical span at residues 588–608 (AAVVSAACCALFLLLLLTGVL). Residues 609-784 (CHRFHGLWYM…WLNLRAAIRS (176 aa)) lie on the Cytoplasmic side of the membrane. Residues 639–782 (ICYDAFVSYS…GFWLNLRAAI (144 aa)) form the TIR domain. A Glycyl lysine isopeptide (Lys-Gly) (interchain with G-Cter in ubiquitin) cross-link involves residue lysine 754. An ATG16L1-binding motif motif is present at residues 761–778 (YLEWPVDETQQEGFWLNL).

The protein belongs to the Toll-like receptor family. In terms of assembly, interacts with LY96, TLR1 and TLR6 (via extracellular domain). TLR2 seems to exist in heterodimers with either TLR1 or TLR6 before stimulation by the ligand. The heterodimers form bigger oligomers in response to their corresponding ligands as well as further heterotypic associations with other receptors such as CD14 and/or CD36. Binds MYD88 (via TIR domain). Interacts with TICAM1. Interacts with CNPY3. Interacts with ATG16L1. Interacts with PPP1R11. Interacts with TICAM2. Interacts with TIRAP. Ubiquitinated at Lys-754 by PPP1R11, leading to its degradation. Deubiquitinated by USP2. Post-translationally, glycosylation of Asn-442 is critical for secretion of the N-terminal ectodomain of TLR2.

The protein localises to the membrane. Its subcellular location is the cytoplasmic vesicle. It is found in the phagosome membrane. The protein resides in the membrane raft. Functionally, cooperates with LY96 to mediate the innate immune response to bacterial lipoproteins and other microbial cell wall components. Cooperates with TLR1 or TLR6 to mediate the innate immune response to bacterial lipoproteins or lipopeptides. Acts via MYD88 and TRAF6, leading to NF-kappa-B activation, cytokine secretion and the inflammatory response. May also promote apoptosis in response to lipoproteins. Forms activation clusters composed of several receptors depending on the ligand, these clusters trigger signaling from the cell surface and subsequently are targeted to the Golgi in a lipid-raft dependent pathway. Forms the cluster TLR2:TLR6:CD14:CD36 in response to diacylated lipopeptides and TLR2:TLR1:CD14 in response to triacylated lipopeptides. The sequence is that of Toll-like receptor 2 (TLR2) from Bubalus bubalis (Domestic water buffalo).